The sequence spans 147 residues: SsrA-binding protein (147 aa).

Positions 119 to 147 (AKGKKQHDKRESEKQKEWERDKQRLMRPK) are disordered. Residues 126-147 (DKRESEKQKEWERDKQRLMRPK) show a composition bias toward basic and acidic residues.

The protein belongs to the SmpB family.

Its subcellular location is the cytoplasm. Required for rescue of stalled ribosomes mediated by trans-translation. Binds to transfer-messenger RNA (tmRNA), required for stable association of tmRNA with ribosomes. tmRNA and SmpB together mimic tRNA shape, replacing the anticodon stem-loop with SmpB. tmRNA is encoded by the ssrA gene; the 2 termini fold to resemble tRNA(Ala) and it encodes a 'tag peptide', a short internal open reading frame. During trans-translation Ala-aminoacylated tmRNA acts like a tRNA, entering the A-site of stalled ribosomes, displacing the stalled mRNA. The ribosome then switches to translate the ORF on the tmRNA; the nascent peptide is terminated with the 'tag peptide' encoded by the tmRNA and targeted for degradation. The ribosome is freed to recommence translation, which seems to be the essential function of trans-translation. The chain is SsrA-binding protein from Nitrosospira multiformis (strain ATCC 25196 / NCIMB 11849 / C 71).